The following is a 478-amino-acid chain: Glycogen synthase (478 aa).

An ADP-alpha-D-glucose-binding site is contributed by lysine 15.

The protein belongs to the glycosyltransferase 1 family. Bacterial/plant glycogen synthase subfamily.

It carries out the reaction [(1-&gt;4)-alpha-D-glucosyl](n) + ADP-alpha-D-glucose = [(1-&gt;4)-alpha-D-glucosyl](n+1) + ADP + H(+). Its pathway is glycan biosynthesis; glycogen biosynthesis. In terms of biological role, synthesizes alpha-1,4-glucan chains using ADP-glucose. The sequence is that of Glycogen synthase from Streptococcus uberis (strain ATCC BAA-854 / 0140J).